The sequence spans 589 residues: Probable translation initiation factor IF-2 (589 aa).

Residues 14-229 (LRQPIVCVLG…LAGLAQRFLE (216 aa)) enclose the tr-type G domain. Residues 23–30 (GHVDHGKT) are G1. 23 to 30 (GHVDHGKT) contributes to the GTP binding site. The segment at 48–52 (GITQR) is G2. The interval 84 to 87 (DTPG) is G3. GTP contacts are provided by residues 84–88 (DTPGH) and 138–141 (NKID). The segment at 138–141 (NKID) is G4. The G5 stretch occupies residues 206 to 208 (SAK).

This sequence belongs to the TRAFAC class translation factor GTPase superfamily. Classic translation factor GTPase family. IF-2 subfamily.

Function in general translation initiation by promoting the binding of the formylmethionine-tRNA to ribosomes. Seems to function along with eIF-2. The chain is Probable translation initiation factor IF-2 (infB) from Thermoplasma acidophilum (strain ATCC 25905 / DSM 1728 / JCM 9062 / NBRC 15155 / AMRC-C165).